Reading from the N-terminus, the 373-residue chain is DNA dC-&gt;dU-editing enzyme APOBEC-3F (373 aa).

2 CMP/dCMP-type deaminase domains span residues 29–137 (RRNT…LCRL) and 174–321 (DDNY…LRSL). A (Microbial infection) Glycyl lysine isopeptide (Lys-Gly) (interchain with G-Cter in ubiquitin) cross-link involves residue lysine 52. 3 residues coordinate Zn(2+): histidine 65, cysteine 96, and cysteine 99. Lysine 234 participates in a covalent cross-link: (Microbial infection) Glycyl lysine isopeptide (Lys-Gly) (interchain with G-Cter in ubiquitin). Histidine 249 serves as a coordination point for Zn(2+). Catalysis depends on glutamate 251, which acts as the Proton donor. Residues cysteine 280 and cysteine 283 each contribute to the Zn(2+) site. Cysteine 280 and cysteine 283 are oxidised to a cystine. Residues lysine 334, lysine 352, lysine 355, and lysine 358 each participate in a (Microbial infection) Glycyl lysine isopeptide (Lys-Gly) (interchain with G-Cter in ubiquitin) cross-link.

Belongs to the cytidine and deoxycytidylate deaminase family. As to quaternary structure, homodimer. Interacts with APOBEC3G in an RNA-dependent manner. Interacts with AGO1, AGO2 and AGO3. In terms of assembly, (Microbial infection) Interacts with HIV-1 Vif, leading to its ubiquitination and degradation by the proteasome. In the absence of Vif protein, specifically packaged into HIV-1 virions. It depends on Zn(2+) as a cofactor. (Microbial infection) Following infection by HIV-1, ubiquitinated by a cullin-5-RING E3 ubiquitin-protein ligase complex (ECS complex) hijacked by the HIV-1 Vif protein, leading to its degradation. Widely expressed. Highly expressed in ovary.

It is found in the cytoplasm. The protein localises to the P-body. It catalyses the reaction a 2'-deoxycytidine in single-stranded DNA + H2O + H(+) = a 2'-deoxyuridine in single-stranded DNA + NH4(+). With respect to regulation, (Microbial infection) Antiviral activity is neutralized by the HIV-1 virion infectivity factor (Vif), that prevents its incorporation into progeny virions by both inhibiting its translation and/or by inducing its ubiquitination and subsequent degradation by the 26S proteasome. Functionally, DNA deaminase (cytidine deaminase) which acts as an inhibitor of retrovirus replication and retrotransposon mobility via deaminase-dependent and -independent mechanisms. Exhibits antiviral activity against viruse such as HIV-1 or HIV-2. After the penetration of retroviral nucleocapsids into target cells of infection and the initiation of reverse transcription, it can induce the conversion of cytosine to uracil in the minus-sense single-strand viral DNA, leading to G-to-A hypermutations in the subsequent plus-strand viral DNA. The resultant detrimental levels of mutations in the proviral genome, along with a deamination-independent mechanism that works prior to the proviral integration, together exert efficient antiretroviral effects in infected target cells. Selectively targets single-stranded DNA and does not deaminate double-stranded DNA or single- or double-stranded RNA. Exhibits antiviral activity also against hepatitis B virus (HBV), equine infectious anemia virus (EIAV), xenotropic MuLV-related virus (XMRV) and simian foamy virus (SFV) and may inhibit the mobility of LTR and non-LTR retrotransposons. May also play a role in the epigenetic regulation of gene expression through the process of active DNA demethylation. In Homo sapiens (Human), this protein is DNA dC-&gt;dU-editing enzyme APOBEC-3F.